We begin with the raw amino-acid sequence, 382 residues long: D-galactonate dehydratase (382 aa).

Residue D183 participates in Mg(2+) binding. The Proton donor role is filled by H185. 2 residues coordinate Mg(2+): E209 and E235. H285 serves as the catalytic Proton acceptor.

The protein belongs to the mandelate racemase/muconate lactonizing enzyme family. GalD subfamily. It depends on Mg(2+) as a cofactor.

It catalyses the reaction D-galactonate = 2-dehydro-3-deoxy-D-galactonate + H2O. It functions in the pathway carbohydrate acid metabolism; D-galactonate degradation; D-glyceraldehyde 3-phosphate and pyruvate from D-galactonate: step 1/3. In terms of biological role, catalyzes the dehydration of D-galactonate to 2-keto-3-deoxy-D-galactonate. This is D-galactonate dehydratase from Salmonella paratyphi A (strain AKU_12601).